We begin with the raw amino-acid sequence, 464 residues long: Cysteine--tRNA ligase 1 (464 aa).

C28 lines the Zn(2+) pocket. The 'HIGH' region motif lies at 30–40 (VTIYDLCHIGH). Residues C209, H234, and E238 each coordinate Zn(2+). The short motif at 266–270 (KMSKS) is the 'KMSKS' region element. K269 contributes to the ATP binding site.

It belongs to the class-I aminoacyl-tRNA synthetase family. As to quaternary structure, monomer. Requires Zn(2+) as cofactor.

It localises to the cytoplasm. The catalysed reaction is tRNA(Cys) + L-cysteine + ATP = L-cysteinyl-tRNA(Cys) + AMP + diphosphate. The polypeptide is Cysteine--tRNA ligase 1 (Photobacterium profundum (strain SS9)).